We begin with the raw amino-acid sequence, 591 residues long: Autotransporter adhesin NhhA (591 aa).

A signal peptide spans 1–51 (MNKIYRIIWNSALNAWVVVSELTRNHTKRASATVKTAVLATLLFATVQASA). Residues 52–503 (NNEEQEEDLY…TNVAQLKGVA (452 aa)) form a surface exposed passenger domain region. Residues 504-591 (QNLNNRIDNV…GASASVGYQW (88 aa)) are translocator domain. The next 4 beta stranded transmembrane spans lie at 537–547 (GKSMMAIGGGT), 551–561 (EAGYAIGYSSI), 570–576 (KGTASGN), and 580–591 (HFGASASVGYQW).

It belongs to the autotransporter-2 (AT-2) (TC 1.B.40) family. Homotrimer.

It is found in the cell surface. The protein localises to the cell outer membrane. Functionally, involved in adhesion of capsulated meningococci to host epithelial cells. Interacts with laminin and heparan sulfate, promoting the adherence to the extracellular matrix (ECM) components. This Neisseria meningitidis serogroup B (strain ATCC BAA-335 / MC58) protein is Autotransporter adhesin NhhA.